The chain runs to 140 residues: MAKKKKYGVVVSRYGVNTGLQVGSYVPVADNSGAKEVMIISVPQVKTRLRRLPSAGVGDLVVVSVKKGTPQMRRQVVYAVVVRQRRPFRRPDGTWVSFEDNAVVIVNPDGTPRGSEVRGPIAREAAERWPRVAKIATMIV.

Belongs to the universal ribosomal protein uL14 family. Part of the 50S ribosomal subunit. Forms a cluster with proteins L3 and L24e, part of which may contact the 16S rRNA in 2 intersubunit bridges.

Its function is as follows. Binds to 23S rRNA. Forms part of two intersubunit bridges in the 70S ribosome. In Aeropyrum pernix (strain ATCC 700893 / DSM 11879 / JCM 9820 / NBRC 100138 / K1), this protein is Large ribosomal subunit protein uL14.